The primary structure comprises 2473 residues: Neurogenic locus notch homolog protein 2 (2473 aa).

An N-terminal signal peptide occupies residues 1 to 25; that stretch reads MPALRPAALRALLWLWLCGAGPAHA. 4 EGF-like domains span residues 26–63, 64–102, 105–143, and 144–180; these read LQCR…EYCQ, HRDP…EDCQ, TSHP…KQCQ, and WTDA…QKCE. Residues 26–1679 are Extracellular-facing; the sequence is LQCRGGQEPC…SELESPRNAQ (1654 aa). 83 cysteine pairs are disulfide-bonded: Cys28–Cys41, Cys35–Cys51, Cys53–Cys62, Cys68–Cys79, Cys73–Cys90, Cys92–Cys101, Cys109–Cys121, Cys115–Cys131, Cys133–Cys142, Cys148–Cys159, Cys153–Cys168, Cys170–Cys179, Cys186–Cys198, Cys192–Cys207, Cys209–Cys218, Cys230–Cys246, Cys248–Cys257, Cys264–Cys275, Cys269–Cys284, Cys286–Cys295, Cys302–Cys315, Cys309–Cys324, Cys326–Cys335, Cys342–Cys353, Cys347–Cys362, Cys364–Cys373, Cys379–Cys390, Cys384–Cys401, Cys403–Cys412, Cys419–Cys433, Cys427–Cys442, Cys444–Cys453, Cys460–Cys471, Cys465–Cys480, Cys482–Cys491, Cys498–Cys509, Cys503–Cys518, Cys520–Cys529, Cys536–Cys547, Cys541–Cys556, Cys558–Cys567, Cys574–Cys584, Cys579–Cys593, Cys595–Cys604, Cys611–Cys622, Cys616–Cys631, Cys633–Cys642, Cys649–Cys659, Cys654–Cys668, Cys670–Cys679, Cys686–Cys697, Cys691–Cys706, Cys708–Cys717, Cys724–Cys734, Cys729–Cys743, Cys745–Cys754, Cys761–Cys772, Cys766–Cys781, Cys783–Cys792, Cys799–Cys810, Cys804–Cys819, Cys821–Cys830, Cys837–Cys848, Cys842–Cys859, Cys861–Cys870, Cys877–Cys888, Cys882–Cys897, Cys899–Cys908, Cys915–Cys926, Cys920–Cys935, Cys937–Cys946, Cys953–Cys964, Cys958–Cys973, Cys975–Cys984, Cys991–Cys1002, Cys996–Cys1011, Cys1013–Cys1022, Cys1029–Cys1040, Cys1034–Cys1049, Cys1051–Cys1060, Cys1067–Cys1078, Cys1072–Cys1087, and Cys1089–Cys1098. N-linked (GlcNAc...) asparagine glycosylation occurs at Asn46. N-linked (GlcNAc...) asparagine glycosylation occurs at Asn155. One can recognise an EGF-like 5; calcium-binding domain in the interval 182 to 219; it reads DINECDIPGRCQHGGTCLNLPGSYRCQCPQGFTGQHCD. The 38-residue stretch at 221 to 258 folds into the EGF-like 6; incomplete domain; it reads PYVPCAPSPCVNGGTCRQTGDFTFECNCLPGFEGSTCE. Positions 260 to 296 constitute an EGF-like 7; calcium-binding domain; that stretch reads NIDDCPNHKCQNGGVCVDGVNTYNCRCPPQWTGQFCT. Positions 298 to 336 constitute an EGF-like 8; calcium-binding domain; it reads DVDECLLQPNACQNGGTCTNRNGGYGCVCVNGWSGDDCS. Residues 338–374 form the EGF-like 9; calcium-binding domain; that stretch reads NIDDCAYASCTPGSTCIDRVASFSCLCPEGKAGLLCH. An EGF-like 10 domain is found at 375–413; it reads LDDACISNPCHKGALCDTNPLNGQYICTCPQGYKGADCT. Positions 415–454 constitute an EGF-like 11; calcium-binding domain; the sequence is DVDECAMANSNPCEHAGKCVNTDGAFHCECLKGYAGPRCE. An EGF-like 12; calcium-binding domain is found at 456-492; that stretch reads DINECHSDPCQNDATCLDKIGGFTCLCMPGFKGVHCE. The region spanning 494 to 530 is the EGF-like 13; calcium-binding domain; it reads EVNECQSNPCVNNGQCVDKVNRFQCLCPPGFTGPVCQ. Residues 532–568 form the EGF-like 14; calcium-binding domain; sequence DIDDCSSTPCLNGAKCIDHPNGYECQCATGFTGILCD. An EGF-like 15; calcium-binding domain is found at 570-605; it reads NIDNCDPDPCHHGQCQDGIDSYTCICNPGYMGAICS. Residues 607–643 form the EGF-like 16; calcium-binding domain; that stretch reads QIDECYSSPCLNDGRCIDLVNGYQCNCQPGTSGLNCE. O-linked (Glc...) serine; alternate glycosylation occurs at Ser613. O-linked (Xyl...) serine; alternate glycosylation occurs at Ser613. Residues 645 to 680 form the EGF-like 17; calcium-binding domain; the sequence is NFDDCASNPCMHGVCVDGINRYSCVCSPGFTGQRCN. One can recognise an EGF-like 18; calcium-binding domain in the interval 682-718; sequence DIDECASNPCRKGATCINDVNGFRCICPEGPHHPSCY. Residues 720–755 enclose the EGF-like 19 domain; that stretch reads QVNECLSNPCIHGNCTGGLSGYKCLCDAGWVGVNCE. An N-linked (GlcNAc...) asparagine glycan is attached at Asn733. An EGF-like 20; calcium-binding domain is found at 757–793; sequence DKNECLSNPCQNGGTCNNLVNGYRCTCKKGFKGYNCQ. In terms of domain architecture, EGF-like 21; calcium-binding spans 795–831; it reads NIDECASNPCLNQGTCFDDVSGYTCHCMLPYTGKNCQ. The EGF-like 22 domain maps to 833-871; the sequence is VLAPCSPNPCENAAVCKEAPNFESFSCLCAPGWQGKRCT. The EGF-like 23; calcium-binding domain occupies 873-909; it reads DVDECISKPCMNNGVCHNTQGSYVCECPPGFSGMDCE. An EGF-like 24; calcium-binding domain is found at 911-947; the sequence is DINDCLANPCQNGGSCVDHVNTFSCQCHPGFIGDKCQ. The 37-residue stretch at 949-985 folds into the EGF-like 25; calcium-binding domain; that stretch reads DMNECLSEPCKNGGTCSDYVNSYTCTCPAGFHGVHCE. In terms of domain architecture, EGF-like 26; calcium-binding spans 987-1023; the sequence is NIDECTESSCFNGGTCVDGINSFSCLCPVGFTGPFCL. An EGF-like 27; calcium-binding domain is found at 1025–1061; that stretch reads DINECSSNPCLNAGTCVDGLGTYRCICPLGYTGKNCQ. 2 EGF-like domains span residues 1063–1099 and 1101–1147; these read LVNL…AYCD and LNVS…SYCE. A glycan (N-linked (GlcNAc...) asparagine) is linked at Asn1102. Intrachain disulfides connect Cys1105–Cys1126, Cys1120–Cys1135, Cys1137–Cys1146, Cys1153–Cys1164, Cys1158–Cys1173, Cys1175–Cys1184, Cys1191–Cys1202, Cys1196–Cys1211, Cys1213–Cys1222, Cys1229–Cys1241, Cys1235–Cys1250, Cys1252–Cys1261, Cys1268–Cys1281, Cys1273–Cys1290, Cys1292–Cys1301, Cys1308–Cys1319, Cys1313–Cys1331, Cys1333–Cys1346, Cys1378–Cys1389, Cys1383–Cys1400, Cys1402–Cys1411, Cys1425–Cys1448, Cys1430–Cys1443, and Cys1439–Cys1455. The region spanning 1149–1185 is the EGF-like 30; calcium-binding domain; sequence QLDECASNPCQHGATCNDFIGGYRCECVPGYQGVNCE. One can recognise an EGF-like 31; calcium-binding domain in the interval 1187 to 1223; sequence EVDECQNQPCQNGGTCIDLVNHFKCSCPPGTRGLLCE. In terms of domain architecture, EGF-like 32; calcium-binding spans 1225–1262; that stretch reads NIDECAGGPHCLNGGQCVDRIGGYTCRCLPGFAGERCE. EGF-like domains lie at 1264–1302, 1304–1343, and 1375–1412; these read DINE…RHCE, FLDV…ARCQ, and ESGC…SHCE. 3 LNR repeats span residues 1425 to 1465, 1466 to 1502, and 1503 to 1544; these read CQSQ…PWAN, CTST…NSKT, and CKYD…NLAE. A negative regulatory region (NRR) region spans residues 1425–1679; it reads CQSQYCADKA…SELESPRNAQ (255 aa). Asn1465 carries an N-linked (GlcNAc...) asparagine glycan. 7 cysteine pairs are disulfide-bonded: Cys1466-Cys1489, Cys1472-Cys1484, Cys1480-Cys1496, Cys1503-Cys1527, Cys1509-Cys1522, Cys1518-Cys1534, and Cys1634-Cys1641. Residues 1680–1700 form a helical membrane-spanning segment; the sequence is LLYLLAVAVVIILFFILLGVI. Residues 1701–2473 lie on the Cytoplasmic side of the membrane; sequence MAKRKRKHGF…PPHSNMQVYA (773 aa). Thr1718 bears the Phosphothreonine mark. Residues 1755 to 1778 are disordered; that stretch reads GTSEHWVDDEGPQPKKAKAEDEAL. Position 1780 is a phosphoserine (Ser1780). The residue at position 1803 (Thr1803) is a Phosphothreonine. Phosphoserine is present on Ser1805. Thr1809 is modified (phosphothreonine). ANK repeat units follow at residues 1828–1872, 1877–1906, 1910–1940, 1944–1973, 1977–2006, and 2010–2039; these read DGCT…SLQA, TGEM…DANA, MGRC…DLDA, DGTT…DVNA, HGKS…NRDM, and KEET…NRDI. A phosphoserine mark is found at Ser1843 and Ser1846. A phosphoserine mark is found at Ser2071, Ser2079, and Ser2082. Phosphothreonine is present on Thr2098. 3 disordered regions span residues 2098–2117, 2122–2169, and 2382–2473; these read TPMG…PTSL, KEAK…TSSP, and VGKY…QVYA. The span at 2099–2108 shows a compositional bias: basic residues; that stretch reads PMGKKARRPN. Composition is skewed to polar residues over residues 2140–2151 and 2390–2400; these read VQLSESSVTLSP and SQHSYASSNAA. Residues 2419 to 2446 are compositionally biased toward low complexity; that stretch reads PSPESPDQWSSSSPHSASDWSDVTTSPT. Residues 2447 to 2456 show a composition bias toward gly residues; sequence PGGGGGGQRG.

Belongs to the NOTCH family. Heterodimer of a C-terminal fragment N(TM) and an N-terminal fragment N(EC) which are probably linked by disulfide bonds. Interacts with MAML1, MAML2 and MAML3 which act as transcriptional coactivators for NOTCH2. Interacts with RELA/p65. Interacts with HIF1AN. Interacts (via ANK repeats) with TCIM, the interaction inhibits the nuclear translocation of NOTCH2 N2ICD. Interacts with CUL1, RBX1, SKP1 and FBXW7 that are SCF(FBXW7) E3 ubiquitin-protein ligase complex components. Interacts with MINAR1; this interaction increases MINAR1 stability and function. Interacts with MDK; this interaction mediates a nuclear accumulation of NOTCH2 and therefore activation of NOTCH2 signaling leading to interaction between HES1 and STAT3. Interacts with MINAR2. Synthesized in the endoplasmic reticulum as an inactive form which is proteolytically cleaved by a furin-like convertase in the trans-Golgi network before it reaches the plasma membrane to yield an active, ligand-accessible form. Cleavage results in a C-terminal fragment N(TM) and a N-terminal fragment N(EC). Following ligand binding, it is cleaved by TNF-alpha converting enzyme (TACE) to yield a membrane-associated intermediate fragment called notch extracellular truncation (NEXT). This fragment is then cleaved by presenilin dependent gamma-secretase to release a notch-derived peptide containing the intracellular domain (NICD) from the membrane. In terms of processing, hydroxylated by HIF1AN. Post-translationally, can be either O-glucosylated or O-xylosylated at Ser-613 by POGLUT1. Phosphorylated by GSK3. GSK3-mediated phosphorylation is necessary for NOTCH2 recognition by FBXW7, ubiquitination and degradation via the ubiquitin proteasome pathway. As to expression, expressed in the brain, liver, kidney, neuroepithelia, somites, optic vesicles and branchial arches, but not heart.

It localises to the cell membrane. Its subcellular location is the nucleus. It is found in the cytoplasm. Functions as a receptor for membrane-bound ligands Jagged-1 (JAG1), Jagged-2 (JAG2) and Delta-1 (DLL1) to regulate cell-fate determination. Upon ligand activation through the released notch intracellular domain (NICD) it forms a transcriptional activator complex with RBPJ/RBPSUH and activates genes of the enhancer of split locus. Affects the implementation of differentiation, proliferation and apoptotic programs. May play an essential role in postimplantation development, probably in some aspect of cell specification and/or differentiation. In collaboration with RELA/p65 enhances NFATc1 promoter activity and positively regulates RANKL-induced osteoclast differentiation. Positively regulates self-renewal of liver cancer cells. In Mus musculus (Mouse), this protein is Neurogenic locus notch homolog protein 2.